A 704-amino-acid polypeptide reads, in one-letter code: Polyribonucleotide nucleotidyltransferase (704 aa).

Mg(2+) contacts are provided by aspartate 485 and aspartate 491. The region spanning 552–611 (PRIYTMKIDPKKIKDVIGKGGATIRALTEETGTSIDIDDDGTVKIAAVDGNAVKTVMARI) is the KH domain. Residues 621–689 (GAVYTGKVTR…RQGRIRLTMR (69 aa)) form the S1 motif domain.

This sequence belongs to the polyribonucleotide nucleotidyltransferase family. In terms of assembly, component of the RNA degradosome, which is a multiprotein complex involved in RNA processing and mRNA degradation. Requires Mg(2+) as cofactor.

The protein resides in the cytoplasm. The enzyme catalyses RNA(n+1) + phosphate = RNA(n) + a ribonucleoside 5'-diphosphate. In terms of biological role, involved in mRNA degradation. Catalyzes the phosphorolysis of single-stranded polyribonucleotides processively in the 3'- to 5'-direction. This is Polyribonucleotide nucleotidyltransferase from Mannheimia succiniciproducens (strain KCTC 0769BP / MBEL55E).